A 336-amino-acid polypeptide reads, in one-letter code: Aspartate carbamoyltransferase catalytic subunit (336 aa).

Carbamoyl phosphate contacts are provided by Arg-72 and Thr-73. Lys-100 is an L-aspartate binding site. Positions 122, 152, and 155 each coordinate carbamoyl phosphate. Positions 185 and 240 each coordinate L-aspartate. 2 residues coordinate carbamoyl phosphate: Gly-281 and Pro-282.

Belongs to the aspartate/ornithine carbamoyltransferase superfamily. ATCase family. In terms of assembly, heterododecamer (2C3:3R2) of six catalytic PyrB chains organized as two trimers (C3), and six regulatory PyrI chains organized as three dimers (R2).

The catalysed reaction is carbamoyl phosphate + L-aspartate = N-carbamoyl-L-aspartate + phosphate + H(+). It participates in pyrimidine metabolism; UMP biosynthesis via de novo pathway; (S)-dihydroorotate from bicarbonate: step 2/3. In terms of biological role, catalyzes the condensation of carbamoyl phosphate and aspartate to form carbamoyl aspartate and inorganic phosphate, the committed step in the de novo pyrimidine nucleotide biosynthesis pathway. The polypeptide is Aspartate carbamoyltransferase catalytic subunit (Marinobacter nauticus (strain ATCC 700491 / DSM 11845 / VT8) (Marinobacter aquaeolei)).